The chain runs to 290 residues: Pyridoxal kinase PdxY (290 aa).

Residues S12 and T47–Q48 contribute to the substrate site. Residues D114, E151, K184, and R211 to L214 contribute to the ATP site. D225 contributes to the substrate binding site.

Belongs to the pyridoxine kinase family. PdxY subfamily. As to quaternary structure, homodimer. Mg(2+) serves as cofactor.

It catalyses the reaction pyridoxal + ATP = pyridoxal 5'-phosphate + ADP + H(+). It functions in the pathway cofactor metabolism; pyridoxal 5'-phosphate salvage; pyridoxal 5'-phosphate from pyridoxal: step 1/1. In terms of biological role, pyridoxal kinase involved in the salvage pathway of pyridoxal 5'-phosphate (PLP). Catalyzes the phosphorylation of pyridoxal to PLP. The polypeptide is Pyridoxal kinase PdxY (Pseudomonas fluorescens (strain ATCC BAA-477 / NRRL B-23932 / Pf-5)).